The following is a 925-amino-acid chain: Serine/threonine-protein phosphatase 1 regulatory subunit 10 (925 aa).

The interaction with TOX4 stretch occupies residues 1-348 (MGSGPIDPKE…EPAPPSEAMD (348 aa)). The 75-residue stretch at 73-147 (KLLNNWLTYS…SDWMAVIRSQ (75 aa)) folds into the TFIIS N-terminal domain. Positions 147–211 (QSSTQPAEKD…APSHAKFRST (65 aa)) are disordered. 2 stretches are compositionally biased toward basic and acidic residues: residues 153-166 (AEKD…EGKS) and 174-196 (PLTE…EKPK). Glycyl lysine isopeptide (Lys-Gly) (interchain with G-Cter in SUMO2) cross-links involve residues Lys179 and Lys262. Disordered regions lie at residues 304 to 398 (KIKK…KRKT), 536 to 555 (TLEP…SKLP), and 587 to 890 (SIMG…HGGD). Phosphoserine is present on Ser313. Positions 325–336 (KTSTEPSTAKPS) are enriched in low complexity. Residues 357–433 (PPVEVPELMD…NKIKDFGEAA (77 aa)) are necessary for interaction with PPP1CA. Ser382 bears the Phosphoserine mark. Residues 393–408 (GRKRKTVTWPEEGKLR) form a necessary for interaction with PPP1CC region. Positions 394–423 (RKRKTVTWPEEGKLREYFYFELDETERVNV) match the PP1-binding motif motif. At Thr398 the chain carries Phosphothreonine; by PKA. Positions 418-619 (TERVNVNKIK…IKQMLVPHGL (202 aa)) are interaction with WDR82. The span at 540 to 551 (GGAGGSPDGAGG) shows a compositional bias: gly residues. Phosphoserine is present on residues Ser545 and Ser591. Residues 596 to 611 (PSEELLKQPDYSDKIK) are compositionally biased toward basic and acidic residues. The segment covering 644-655 (PPGPGGPMPGPH) has biased composition (pro residues). Positions 656–665 (GGPGGPGGPV) are enriched in gly residues. At Arg668 the chain carries Omega-N-methylarginine. Residues 679 to 693 (GDPFWDGPGDPMRGG) are compositionally biased toward low complexity. Residues Arg696 and Arg741 each carry the omega-N-methylarginine modification. Gly residues-rich tracts occupy residues 728–766 (ARGG…GMSS) and 775–829 (GPGG…AGGG). 2 stretches are compositionally biased toward basic and acidic residues: residues 846–871 (PHDV…HDGP) and 879–890 (RGHDGGHNHGGD). The segment at 891-919 (MSKRPVCRHFMMKGNCRYENNCAFYHPGV) adopts a C3H1-type zinc-finger fold.

As to quaternary structure, component of the PNUTS-PP1 complex (also named PTW/PP1 complex), composed of PPP1R10/PNUTS, TOX4, WDR82, and PPP1CA (or PPP1CB or PPP1CC). Post-translationally, phosphorylated on Ser-398 by PKA within the region necessary for interaction with PPP1CA.

Its subcellular location is the nucleus. The protein localises to the chromosome. Its function is as follows. Substrate-recognition component of the PNUTS-PP1 protein phosphatase complex, a protein phosphatase 1 (PP1) complex that promotes RNA polymerase II transcription pause-release, allowing transcription elongation. Promoter-proximal pausing by RNA polymerase II is a transcription halt following transcription initiation but prior to elongation, which acts as a checkpoint to control that transcripts are favorably configured for transcriptional elongation. The PNUTS-PP1 complex mediates the release of RNA polymerase II from promoter-proximal region of genes by catalyzing dephosphorylation of proteins involved in transcription, such as AFF4, CDK9, MEPCE, INTS12, NCBP1, POLR2M/GDOWN1 and SUPT6H. The PNUTS-PP1 complex also regulates RNA polymerase II transcription termination by mediating dephosphorylation of SUPT5H in termination zones downstream of poly(A) sites, thereby promoting deceleration of RNA polymerase II transcription. PNUTS-PP1 complex is also involved in the response to replication stress by mediating dephosphorylation of POLR2A at 'Ser-5' of the CTD, promoting RNA polymerase II degradation. The PNUTS-PP1 complex also plays a role in the control of chromatin structure and cell cycle progression during the transition from mitosis into interphase. PNUTS-PP1 complex mediates dephosphorylation of MYC, promoting MYC stability by preventing MYC ubiquitination by the SCF(FBXW7) complex. In addition to acts as a substrate-recognition component, PPP1R10/PNUTS also acts as a nuclear targeting subunit for the PNUTS-PP1 complex. In some context, PPP1R10/PNUTS also acts as an inhibitor of protein phosphatase 1 (PP1) activity by preventing access to substrates, such as RB. The sequence is that of Serine/threonine-protein phosphatase 1 regulatory subunit 10 (PPP1R10) from Sus scrofa (Pig).